Here is a 231-residue protein sequence, read N- to C-terminus: 7-cyano-7-deazaguanine synthase (231 aa).

8 to 18 lines the ATP pocket; sequence FSGGQDSTTCL. Residues C188, C197, C200, and C203 each contribute to the Zn(2+) site.

This sequence belongs to the QueC family. Requires Zn(2+) as cofactor.

The enzyme catalyses 7-carboxy-7-deazaguanine + NH4(+) + ATP = 7-cyano-7-deazaguanine + ADP + phosphate + H2O + H(+). Its pathway is purine metabolism; 7-cyano-7-deazaguanine biosynthesis. Functionally, catalyzes the ATP-dependent conversion of 7-carboxy-7-deazaguanine (CDG) to 7-cyano-7-deazaguanine (preQ(0)). This chain is 7-cyano-7-deazaguanine synthase, found in Salmonella paratyphi B (strain ATCC BAA-1250 / SPB7).